The chain runs to 358 residues: S-adenosylmethionine:tRNA ribosyltransferase-isomerase (358 aa).

It belongs to the QueA family. In terms of assembly, monomer.

Its subcellular location is the cytoplasm. It carries out the reaction 7-aminomethyl-7-carbaguanosine(34) in tRNA + S-adenosyl-L-methionine = epoxyqueuosine(34) in tRNA + adenine + L-methionine + 2 H(+). Its pathway is tRNA modification; tRNA-queuosine biosynthesis. Transfers and isomerizes the ribose moiety from AdoMet to the 7-aminomethyl group of 7-deazaguanine (preQ1-tRNA) to give epoxyqueuosine (oQ-tRNA). This Desulfotalea psychrophila (strain LSv54 / DSM 12343) protein is S-adenosylmethionine:tRNA ribosyltransferase-isomerase.